Reading from the N-terminus, the 152-residue chain is uncharacterized protein (152 aa).

Residues 1 to 13 (MHFSKLSRRKKGK) show a composition bias toward basic residues. Disordered regions lie at residues 1-28 (MHFSKLSRRKKGKVPLPPLPTAPLPPHR) and 75-152 (NRLG…AADE). Pro residues-rich tracts occupy residues 15-26 (PLPPLPTAPLPP) and 80-92 (PPAPRPPGAPQPP). Positions 133–152 (DGGDAEPGDEDLDALFAADE) are enriched in acidic residues.

This is an uncharacterized protein from Pan troglodytes (Chimpanzee).